Here is a 629-residue protein sequence, read N- to C-terminus: Serine/threonine-protein kinase ICK (629 aa).

The Protein kinase domain maps to 4 to 284 (YTTIKQLGDG…ASQALRYPYF (281 aa)). ATP is bound by residues 10 to 18 (LGDGTYGSV) and lysine 33. Aspartate 125 acts as the Proton acceptor in catalysis. Position 157 is a phosphothreonine; by CDK7 (threonine 157). Residue tyrosine 159 is modified to Phosphotyrosine. Serine 161 is subject to Phosphoserine. Disordered regions lie at residues 292–376 (IISK…SLHN), 455–483 (SESV…SSAK), and 581–629 (SSLK…PSRR). Basic and acidic residues predominate over residues 296–306 (DSGKPQREVQD). The segment covering 309-321 (GPPPYIKPAPPAQ) has biased composition (pro residues). 2 stretches are compositionally biased toward low complexity: residues 322–344 (APAK…PQHS) and 457–470 (SVGT…QASS).

This sequence belongs to the protein kinase superfamily. CMGC Ser/Thr protein kinase family. CDC2/CDKX subfamily. It depends on Mg(2+) as a cofactor. In terms of processing, autophosphorylated on serine and threonine residues. Phosphorylation at Thr-157 by CDK7/Cak1p increases kinase activity. As to expression, highly expressed in colon and lung, lower levels present in heart, esophagus, stomach, small intestine and ovary. Localizes to the crypt region of large and small intestine.

The protein resides in the cytoplasm. The protein localises to the cytosol. Its subcellular location is the cell projection. It localises to the cilium. It is found in the nucleus. The protein resides in the cytoskeleton. The protein localises to the cilium basal body. The enzyme catalyses L-seryl-[protein] + ATP = O-phospho-L-seryl-[protein] + ADP + H(+). It catalyses the reaction L-threonyl-[protein] + ATP = O-phospho-L-threonyl-[protein] + ADP + H(+). Has an essential role in ciliogenesis, particularly in neuronal and retinal progenitor cells. Phosphorylates KIF3A. Involved in the control of ciliary length. Regulates the ciliary localization of SHH pathway components as well as the localization of IFT components at ciliary tips. May play a role in cardiac development. Regulates intraflagellar transport (IFT) speed and negatively regulates cilium length in a cAMP and mTORC1 signaling -dependent manner and this regulation requires its kinase activity. This is Serine/threonine-protein kinase ICK (Cilk1) from Mus musculus (Mouse).